The chain runs to 287 residues: Viomycin phosphotransferase (287 aa).

Asp190 serves as the catalytic Proton acceptor.

This sequence belongs to the aminoglycoside phosphotransferase family.

The catalysed reaction is viomycin + ATP = O-phosphoviomycin + ADP + H(+). The aminoglycoside phosphotransferases achieve inactivation of their antibiotic substrates by phosphorylation. The protein is Viomycin phosphotransferase (vph) of Streptomyces vinaceus.